A 220-amino-acid chain; its full sequence is Uracil-DNA glycosylase (220 aa).

Catalysis depends on D61, which acts as the Proton acceptor.

This sequence belongs to the uracil-DNA glycosylase (UDG) superfamily. UNG family.

It is found in the cytoplasm. It catalyses the reaction Hydrolyzes single-stranded DNA or mismatched double-stranded DNA and polynucleotides, releasing free uracil.. Functionally, excises uracil residues from the DNA which can arise as a result of misincorporation of dUMP residues by DNA polymerase or due to deamination of cytosine. In Glaesserella parasuis serovar 5 (strain SH0165) (Haemophilus parasuis), this protein is Uracil-DNA glycosylase.